Here is a 214-residue protein sequence, read N- to C-terminus: Putative 3-methyladenine DNA glycosylase (214 aa).

Belongs to the DNA glycosylase MPG family.

This is Putative 3-methyladenine DNA glycosylase from Gloeobacter violaceus (strain ATCC 29082 / PCC 7421).